Consider the following 193-residue polypeptide: Acyl carrier protein phosphodiesterase (193 aa).

This sequence belongs to the AcpH family.

It catalyses the reaction holo-[ACP] + H2O = apo-[ACP] + (R)-4'-phosphopantetheine + H(+). In terms of biological role, converts holo-ACP to apo-ACP by hydrolytic cleavage of the phosphopantetheine prosthetic group from ACP. The polypeptide is Acyl carrier protein phosphodiesterase (Klebsiella pneumoniae subsp. pneumoniae (strain ATCC 700721 / MGH 78578)).